The following is a 177-amino-acid chain: Outer membrane lipoprotein Blc (177 aa).

The first 18 residues, 1 to 18, serve as a signal peptide directing secretion; sequence MRILPVVAAVTAAFLVVA. A lipid anchor (N-palmitoyl cysteine) is attached at Cys-19. Cys-19 is lipidated: S-diacylglycerol cysteine.

Belongs to the calycin superfamily. Lipocalin family. In terms of assembly, homodimer.

Its subcellular location is the cell outer membrane. Its function is as follows. Involved in the storage or transport of lipids necessary for membrane maintenance under stressful conditions. Displays a binding preference for lysophospholipids. This Citrobacter freundii protein is Outer membrane lipoprotein Blc.